The primary structure comprises 373 residues: MPGWSCLVTGAGGFLGQRIIRMLVQEKELQEVRALDKVFRPETREEFCKLQTKTKVTVLEGDILDAQCLRRACQGISVVIHTAAAIDVFGAIPRQTIIDINLKGTLNLLEACVQASVPAFIYTSSIDVAGPNSYKEIVLNGHEEQQHESTWSDPYPYSKKMAEKAVLAANGSSLKNGGTLHTCALRPMYIYGEKSPLISVTIIRAVKNSGILDVTGKFSTVNPVYVNNAAWAHILAARGLQDPRKSPNIQGQFYYISDDTPHQSYDDLNYVLSKDWGLRPDSSWRPPVALLYWLGFLLELVSFLLRPVYNYQPPFNRHLVTLSNTVFTFSYKKAQRDLGYEPLVGWEEARENTSEWIGSLVEQHKGTLNTKAQ.

Residues 10–15 (GAGGFL), Y155, and K159 each bind NADP(+). The active-site Proton donor is the K159. Residues 288-308 (VALLYWLGFLLELVSFLLRPV) traverse the membrane as a helical segment.

The protein belongs to the 3-beta-HSD family. As to expression, high levels in adrenal gland, kidney and male liver. Low levels in female liver.

Its subcellular location is the endoplasmic reticulum membrane. It localises to the mitochondrion membrane. It carries out the reaction a 3beta-hydroxy-Delta(5)-steroid + NAD(+) = a 3-oxo-Delta(5)-steroid + NADH + H(+). It catalyses the reaction pregnenolone + NAD(+) = pregn-5-ene-3,20-dione + NADH + H(+). The enzyme catalyses 3beta-hydroxyandrost-5-en-17-one + NAD(+) = androst-5-ene-3,17-dione + NADH + H(+). The catalysed reaction is androst-5-en-3beta,17beta-diol + NAD(+) = 17beta-hydroxy-androst-5-en-3-one + NADH + H(+). It carries out the reaction a 3beta-hydroxysteroid + NADP(+) = a 3-oxosteroid + NADPH + H(+). It catalyses the reaction 5alpha-androstane-3beta,17beta-diol + NADP(+) = 17beta-hydroxy-5alpha-androstan-3-one + NADPH + H(+). The enzyme catalyses 3beta-hydroxy-5alpha-androstan-17-one + NADP(+) = 5alpha-androstan-3,17-dione + NADPH + H(+). The catalysed reaction is a 3-oxo-Delta(5)-steroid = a 3-oxo-Delta(4)-steroid. It carries out the reaction pregn-5-ene-3,20-dione = progesterone. It catalyses the reaction androst-5-ene-3,17-dione = androst-4-ene-3,17-dione. The enzyme catalyses 17beta-hydroxy-androst-5-en-3-one = testosterone. The catalysed reaction is 5alpha-androstane-3beta,17beta-diol + NAD(+) = 17beta-hydroxy-5alpha-androstan-3-one + NADH + H(+). It functions in the pathway steroid hormone biosynthesis. Its pathway is steroid metabolism. Its function is as follows. A bifunctional enzyme responsible for the oxidation and isomerization of 3beta-hydroxy-Delta(5)-steroid precursors to 3-oxo-Delta(4)-steroids, an essential step in steroid hormone biosynthesis. Specifically catalyzes the conversion of pregnenolone to progesterone, 17alpha-hydroxypregnenolone to 17alpha-hydroxyprogesterone, dehydroepiandrosterone (DHEA) to 4-androstenedione, and androstenediol to testosterone. Additionally, catalyzes the interconversion between 3beta-hydroxy and 3-oxo-5alpha-androstane steroids controlling the bioavalability of the active forms. Specifically converts dihydrotestosterone to its inactive form 5alpha-androstanediol, that does not bind androgen receptor/AR. Also converts androstanedione, a precursor of testosterone and estrone, to epiandrosterone. Expected to use NAD(+) as preferred electron donor for the 3-beta-hydroxy-steroid dehydrogenase activity and NADPH for the 3-ketosteroid reductase activity. The chain is 3 beta-hydroxysteroid dehydrogenase/Delta 5--&gt;4-isomerase type 1 (HSD3B1) from Mesocricetus auratus (Golden hamster).